The following is a 329-amino-acid chain: Cytoplasmic phosphatidylinositol transfer protein 1 (329 aa).

The tract at residues 267–329 is disordered; the sequence is SHGGYSSAPS…GNKPSLAKPE (63 aa).

It belongs to the PtdIns transfer protein family. PI transfer class IIB subfamily.

It is found in the cytoplasm. The enzyme catalyses a 1,2-diacyl-sn-glycero-3-phospho-(1D-myo-inositol)(in) = a 1,2-diacyl-sn-glycero-3-phospho-(1D-myo-inositol)(out). The catalysed reaction is a 1,2-diacyl-sn-glycero-3-phosphate(in) = a 1,2-diacyl-sn-glycero-3-phosphate(out). Functionally, catalyzes the transfer of phosphatidylinositol (PI) and phosphatidic acid (PA) between membranes. Binds PA derived from the phospholipase D signaling pathway and among the cellular PA species, preferably binds to the C16:0/16:1 and C16:1/18:1 PA species. In Xenopus tropicalis (Western clawed frog), this protein is Cytoplasmic phosphatidylinositol transfer protein 1 (pitpnc1).